The sequence spans 316 residues: Aspartate carbamoyltransferase catalytic subunit (316 aa).

2 residues coordinate carbamoyl phosphate: Arg-59 and Thr-60. Lys-88 is a binding site for L-aspartate. Carbamoyl phosphate-binding residues include Arg-109, His-137, and Gln-140. Residues Arg-170 and Arg-232 each coordinate L-aspartate. Positions 269 and 270 each coordinate carbamoyl phosphate.

The protein belongs to the aspartate/ornithine carbamoyltransferase superfamily. ATCase family. Heterooligomer of catalytic and regulatory chains.

The catalysed reaction is carbamoyl phosphate + L-aspartate = N-carbamoyl-L-aspartate + phosphate + H(+). It functions in the pathway pyrimidine metabolism; UMP biosynthesis via de novo pathway; (S)-dihydroorotate from bicarbonate: step 2/3. Functionally, catalyzes the condensation of carbamoyl phosphate and aspartate to form carbamoyl aspartate and inorganic phosphate, the committed step in the de novo pyrimidine nucleotide biosynthesis pathway. This is Aspartate carbamoyltransferase catalytic subunit from Methanobrevibacter smithii (strain ATCC 35061 / DSM 861 / OCM 144 / PS).